A 213-amino-acid chain; its full sequence is ER lumen protein-retaining receptor (213 aa).

Topologically, residues 1–2 are lumenal; the sequence is MN. The chain crosses the membrane as a helical span at residues 3–21; the sequence is IFRITADLAHAVAIVILLL. Residues 22–35 are Cytoplasmic-facing; the sequence is KIWKSRSCEGISGR. A helical transmembrane segment spans residues 36–53; that stretch reads SQILFAVTFFTRYLDLFT. At 54-61 the chain is on the lumenal side; it reads SFYSLYNT. A helical membrane pass occupies residues 62–80; that stretch reads VMKVLFLAGSIGTVYLMWV. Residues 81–96 are Cytoplasmic-facing; the sequence is KFKATYDRNNDTFRIE. The helical transmembrane segment at 97 to 110 threads the bilayer; it reads FLVIPSIILALIIN. Residues 111 to 117 are Lumenal-facing; the sequence is HEFMFME. A helical transmembrane segment spans residues 118-137; that stretch reads VMWTFSIYLEAVAIMPQLFM. Over 138–149 the chain is Cytoplasmic; it reads LSRTGNAETITA. Residues 150–168 traverse the membrane as a helical segment; that stretch reads HYLFALGSYRFLYIFNWVY. The Lumenal portion of the chain corresponds to 169 to 178; it reads RYYTESFFDP. Residues 179–199 form a helical membrane-spanning segment; it reads IAVVAGIVQTVLYADFFYLYI. At 200–213 the chain is on the cytoplasmic side; it reads TRVIQSNRQFEMSA.

This sequence belongs to the ERD2 family.

The protein localises to the endoplasmic reticulum membrane. Its function is as follows. Required for the retention of luminal endoplasmic reticulum proteins. Determines the specificity of the luminal ER protein retention system. Also required for normal vesicular traffic through the Golgi. The chain is ER lumen protein-retaining receptor (erd-2.1) from Caenorhabditis briggsae.